We begin with the raw amino-acid sequence, 785 residues long: Penicillin-binding protein 1A (785 aa).

A disordered region spans residues 1–61 (MPPDDRLTAV…SGPGGPSGPG (61 aa)). Residues 33 to 45 (SPPPKPPPPPPPG) are compositionally biased toward pro residues. Positions 46–59 (RGGGGPSGPGGPSG) are enriched in gly residues. The chain crosses the membrane as a helical span at residues 77–97 (IAVAVMVLLPLITFGMAYMIV). Residues 118-299 (GSEIARIVPP…RWNWVLDGMV (182 aa)) are transglycosylase. The Proton donor; for transglycosylase activity role is filled by E151. The segment at 392 to 662 (AVVSIDPRTG…EGVKPLVNKW (271 aa)) is transpeptidase. The active-site Acyl-ester intermediate; for transpeptidase activity is the S426. Disordered regions lie at residues 605 to 626 (SRGH…VQLG), 690 to 726 (ESFP…QPSV), and 738 to 785 (GITI…PPPP). Pro residues-rich tracts occupy residues 708–721 (PAAP…PTDP) and 743–758 (IGPP…PGAP). A compositionally biased stretch (low complexity) spans 759 to 775 (GAPVGPGAPEVPVAPGA).

It localises to the cell membrane. The enzyme catalyses [GlcNAc-(1-&gt;4)-Mur2Ac(oyl-L-Ala-gamma-D-Glu-L-Lys-D-Ala-D-Ala)](n)-di-trans,octa-cis-undecaprenyl diphosphate + beta-D-GlcNAc-(1-&gt;4)-Mur2Ac(oyl-L-Ala-gamma-D-Glu-L-Lys-D-Ala-D-Ala)-di-trans,octa-cis-undecaprenyl diphosphate = [GlcNAc-(1-&gt;4)-Mur2Ac(oyl-L-Ala-gamma-D-Glu-L-Lys-D-Ala-D-Ala)](n+1)-di-trans,octa-cis-undecaprenyl diphosphate + di-trans,octa-cis-undecaprenyl diphosphate + H(+). It catalyses the reaction Preferential cleavage: (Ac)2-L-Lys-D-Ala-|-D-Ala. Also transpeptidation of peptidyl-alanyl moieties that are N-acyl substituents of D-alanine.. It participates in cell wall biogenesis; peptidoglycan biosynthesis. Its function is as follows. Cell wall formation. Synthesis of cross-linked peptidoglycan from the lipid intermediates. The enzyme has a penicillin-insensitive transglycosylase N-terminal domain (formation of linear glycan strands) and a penicillin-sensitive transpeptidase C-terminal domain (cross-linking of the peptide subunits). This chain is Penicillin-binding protein 1A (ponA1), found in Mycolicibacterium smegmatis (strain ATCC 700084 / mc(2)155) (Mycobacterium smegmatis).